The following is a 676-amino-acid chain: Exostosin-like 1 (676 aa).

Residues 1–9 are Cytoplasmic-facing; sequence MQSWRRRKS. The helical; Signal-anchor for type II membrane protein transmembrane segment at 10-30 threads the bilayer; sequence LWLALSASWLLLVLLGGFSLL. Residues 31–676 lie on the Lumenal side of the membrane; the sequence is RLALPPRPRP…RKKYRSLEKP (646 aa). The tract at residues 238 to 264 is disordered; that stretch reads TADTGSSACPWDGRCEQDPGPGQTQRQ. Residue N269 is glycosylated (N-linked (GlcNAc...) asparagine). Cysteines 584 and 634 form a disulfide. Positions 610–631 are disordered; sequence RQEAAPLAPGGPGPRPKPPAPA. Residues 618-631 are compositionally biased toward pro residues; the sequence is PGGPGPRPKPPAPA.

The protein belongs to the glycosyltransferase 47 family.

Its subcellular location is the endoplasmic reticulum membrane. It carries out the reaction 3-O-{[(1-&gt;4)-beta-D-GlcA-(1-&gt;4)-alpha-D-GlcNAc](n)-(1-&gt;4)-beta-D-GlcA-(1-&gt;3)-beta-D-Gal-(1-&gt;3)-beta-D-Gal-(1-&gt;4)-beta-D-Xyl}-L-seryl-[protein] + UDP-N-acetyl-alpha-D-glucosamine = 3-O-{alpha-D-GlcNAc-[(1-&gt;4)-beta-D-GlcA-(1-&gt;4)-alpha-D-GlcNAc](n)-(1-&gt;4)-beta-D-GlcA-(1-&gt;3)-beta-D-Gal-(1-&gt;3)-beta-D-Gal-(1-&gt;4)-beta-D-Xyl}-L-seryl-[protein] + UDP + H(+). It functions in the pathway protein modification; protein glycosylation. In terms of biological role, glycosyltransferase required for the biosynthesis of heparan-sulfate (HS). Transfers N-acetyl-alpha-D-glucosamine to the nascent HS chain (GlcNAcT-II activity). Appears to lack GlcNAcT I and GlcAT-II activities. In Homo sapiens (Human), this protein is Exostosin-like 1 (EXTL1).